The sequence spans 968 residues: RNA polymerase-associated protein RapA (968 aa).

The region spanning 164 to 334 (EVGQRHAPRV…FARLRLLDPD (171 aa)) is the Helicase ATP-binding domain. 177–184 (DEVGLGKT) provides a ligand contact to ATP. Residues 280-283 (DEAH) carry the DEAH box motif. In terms of domain architecture, Helicase C-terminal spans 490–664 (RVEWLLNYLI…ATPSEQEGLD (175 aa)).

The protein belongs to the SNF2/RAD54 helicase family. RapA subfamily. In terms of assembly, interacts with the RNAP. Has a higher affinity for the core RNAP than for the holoenzyme. Its ATPase activity is stimulated by binding to RNAP.

Functionally, transcription regulator that activates transcription by stimulating RNA polymerase (RNAP) recycling in case of stress conditions such as supercoiled DNA or high salt concentrations. Probably acts by releasing the RNAP, when it is trapped or immobilized on tightly supercoiled DNA. Does not activate transcription on linear DNA. Probably not involved in DNA repair. The polypeptide is RNA polymerase-associated protein RapA (Yersinia enterocolitica serotype O:8 / biotype 1B (strain NCTC 13174 / 8081)).